The primary structure comprises 125 residues: Somatostatin-2 (125 aa).

The first 24 residues, 1 to 24, serve as a signal peptide directing secretion; it reads MQCIRCPAILALLALVLCGPSVSS. Glutamine 25 carries the pyrrolidone carboxylic acid modification. Positions 25–97 are excised as a propeptide; it reads QLDREQSDNQ…ATGGRMNLER (73 aa). Residues 82-107 form a disordered region; the sequence is AEDASMATGGRMNLERSVDSTNNLPP. The cysteines at positions 114 and 125 are disulfide-linked. The residue at position 120 (lysine 120) is a 5-hydroxylysine.

This sequence belongs to the somatostatin family.

The protein resides in the secreted. In terms of biological role, somatostatin inhibits the release of somatotropin. The chain is Somatostatin-2 (sst2) from Lophius americanus (American angler).